The primary structure comprises 448 residues: RNA-binding protein 42 (448 aa).

Positions 1–29 (MAGAGPAPGLPGAGGPVVPGPGAGIPGKS) are disordered. Alanine 2 carries the N-acetylalanine modification. Gly residues predominate over residues 11–27 (PGAGGPVVPGPGAGIPG). A Phosphoserine modification is found at serine 132. Arginine 149 is modified (asymmetric dimethylarginine). The interval 204–448 (ELGLGLGLGL…QKEKKKLGLR (245 aa)) is necessary for interaction with HNRNPK. The disordered stretch occupies residues 286–324 (LSLRPRPRPPRPEPPPGLMALEVPEPLSEDKKKGKPEKL). Residues 313-324 (SEDKKKGKPEKL) are compositionally biased toward basic and acidic residues. An RRM domain is found at 349–427 (FRIFCGDLGN…RPIKLRKSMW (79 aa)).

The protein belongs to the RRM RBM42 family. As to quaternary structure, interacts with HNRNPK.

The protein localises to the nucleus. It localises to the cytoplasm. In terms of biological role, binds (via the RRM domain) to the 3'-untranslated region (UTR) of CDKN1A mRNA. This is RNA-binding protein 42 (RBM42) from Bos taurus (Bovine).